A 236-amino-acid chain; its full sequence is tRNA1(Val) (adenine(37)-N6)-methyltransferase (236 aa).

Belongs to the methyltransferase superfamily. tRNA (adenine-N(6)-)-methyltransferase family.

It localises to the cytoplasm. The enzyme catalyses adenosine(37) in tRNA1(Val) + S-adenosyl-L-methionine = N(6)-methyladenosine(37) in tRNA1(Val) + S-adenosyl-L-homocysteine + H(+). Its function is as follows. Specifically methylates the adenine in position 37 of tRNA(1)(Val) (anticodon cmo5UAC). The polypeptide is tRNA1(Val) (adenine(37)-N6)-methyltransferase (Actinobacillus succinogenes (strain ATCC 55618 / DSM 22257 / CCUG 43843 / 130Z)).